We begin with the raw amino-acid sequence, 32 residues long: Cyclotide glopa B (32 aa).

Positions 1 to 32 (GGSVPCIETCVWTGCFLVPGCSCKSDKKCYLN) form a cross-link, cyclopeptide (Gly-Asn). Cystine bridges form between Cys6–Cys21, Cys10–Cys23, and Cys15–Cys29.

This is a cyclic peptide.

Probably participates in a plant defense mechanism. The protein is Cyclotide glopa B of Gloeospermum pauciflorum.